The chain runs to 274 residues: MVDFLQALVLGLIQGLTEFLPISSSAHLRIYPELFGWGDPGAAFTAVIQIGTEVAVLMFFRKDIWRIGRAWLLSLFKPEYRGHLDARMGWFIIVGSVPIVLLGIALKDVIEEDFRSLWLIGTTLIVLGLVLGVADRLGGTDKTIKQISLRDAILMGLAQALALIPGVSRSGATLSMGRLLGYDREAATRYAFLLAIPAVIGAGVFELKDIPNGDNLYGWGPTIVATIVSFVVGYAAIAWLLRYVTTRSYAPFVLYRVALGAATLVLVATGVIAA.

Transmembrane regions (helical) follow at residues proline 40–phenylalanine 60, tryptophan 90–isoleucine 110, phenylalanine 114–alanine 134, isoleucine 147–valine 167, tyrosine 190–isoleucine 210, proline 221–leucine 241, and phenylalanine 252–isoleucine 272.

This sequence belongs to the UppP family.

It localises to the cell membrane. The catalysed reaction is di-trans,octa-cis-undecaprenyl diphosphate + H2O = di-trans,octa-cis-undecaprenyl phosphate + phosphate + H(+). Its function is as follows. Catalyzes the dephosphorylation of undecaprenyl diphosphate (UPP). Confers resistance to bacitracin. This Nocardioides sp. (strain ATCC BAA-499 / JS614) protein is Undecaprenyl-diphosphatase.